We begin with the raw amino-acid sequence, 510 residues long: NAD(P)H-quinone oxidoreductase subunit 2 A, chloroplastic (510 aa).

The next 13 membrane-spanning stretches (helical) occupy residues 24–44, 57–77, 99–119, 124–144, 149–169, 183–203, 227–247, 295–315, 323–343, 354–374, 395–415, 418–438, and 484–504; these read LLLF…GLIL, IPWL…ALLF, IFQF…VEYI, MAIT…MFLC, LITI…LSGY, YLLM…WLYG, PGIS…LSPA, WHLL…LIAI, MLAY…IVGD, YMLF…LFGL, ALSL…AGFF, LYLF…IGLL, and MIVC…IIAI.

This sequence belongs to the complex I subunit 2 family. In terms of assembly, NDH is composed of at least 16 different subunits, 5 of which are encoded in the nucleus.

Its subcellular location is the plastid. It is found in the chloroplast thylakoid membrane. The catalysed reaction is a plastoquinone + NADH + (n+1) H(+)(in) = a plastoquinol + NAD(+) + n H(+)(out). The enzyme catalyses a plastoquinone + NADPH + (n+1) H(+)(in) = a plastoquinol + NADP(+) + n H(+)(out). Its function is as follows. NDH shuttles electrons from NAD(P)H:plastoquinone, via FMN and iron-sulfur (Fe-S) centers, to quinones in the photosynthetic chain and possibly in a chloroplast respiratory chain. The immediate electron acceptor for the enzyme in this species is believed to be plastoquinone. Couples the redox reaction to proton translocation, and thus conserves the redox energy in a proton gradient. The chain is NAD(P)H-quinone oxidoreductase subunit 2 A, chloroplastic from Solanum tuberosum (Potato).